The primary structure comprises 1057 residues: MVKSGARASDSFIKQRSGSGSILRIKVENFMCHSNLQIEFGEWVNFITGQNGSGKSAILTALCVAFGCRARGTQRAATLKDFIKTGCSYAVVQVEMKNSGEDAFKPEIYGGVIIIERRITESATATVLKDYLGKKVSNKRDELRELVEHFNIDVENPCVVMSQDKSREFLHSGNDKDKFKFFFKATLLQQVNDLLQSIYEHLTKATAIVDELENTIKPIEKEISELRGKIKNMEQVEEIAQRLQQLKKKLAWSWVYDVDRQLQEQTEKIVKLKERIPTCQAKIDWELGKVESLRDTLTKKKAQVACLMDESTAMKREIESFHQSAKTAVREKIALQEEFNHKCNYVQKIKDRVRRLERQVGDINEQTMKNTQAEQSEIEEKLKYLEQEVEKVETLRSRLKEEENCFLEKAFEGRKKMEHIEDMIKNHQKRQRFITSNINDLKKHQTNKVTAFGGDRVINLLQAIERNHRRFRKPPIGPIGSHVTLVNGNKWASSVEQALGTLLNAFIVTDHKDSLTLRGCANEANYRNLKIIIYDFSRPRLNIPRHMVPQTEHPTIFSVIDSDNPTVLNVLVDQSGVERQVLAENYEEGKAVAFGKRLSNLKEVYTLDGYKMFFRGPVQTTLPPLSRRPSRLCASFDDQIKDLEIEASKEQNEINQCMRRKREAEENLEELELKVRQLKKHRSQAEKVLTTKELEMHDLKNTVAAEIEALPSSSVNELQREIMKDLEEIDEKEAFLEKLQNCLKEAELKANKLTALFENMRESAKGEIDAFEEAENELKKIEKDLQSAEAEKIHYENIMKNKVLPDIKNAEANYEELKNKRKESDQKASEICPESEIESLGPWDGSTPEQLSAQITRMNQRLHRENQQFSESIDDLRMMYESLERKIAKKRKSYQDHREKLMACKNALDSRWAKFQRNASLLRRQLTWQFNAHLGKKGISGHIKVSYENKTLSIEVKMPQDATSNVVRDTKGLSGGERSFSTLCFALALHEMTEAPFRAMDEFDVFMDAVSRKISLDALVDFAIGEGSQWMFITPHDISMVKSHERIKKQQMAAPRS.

The region spanning 22 to 1047 (ILRIKVENFM…ISMVKSHERI (1026 aa)) is the Zinc-hook domain. 49–56 (GQNGSGKS) lines the ATP pocket. Residues 135–448 (KVSNKRDELR…NDLKKHQTNK (314 aa)) are a coiled coil. A flexible hinge region spans residues 449–632 (VTAFGGDRVI…PPLSRRPSRL (184 aa)). The stretch at 633–904 (CASFDDQIKD…QDHREKLMAC (272 aa)) forms a coiled coil. Residues 818–828 (KNKRKESDQKA) are compositionally biased toward basic and acidic residues. The disordered stretch occupies residues 818-845 (KNKRKESDQKASEICPESEIESLGPWDG).

This sequence belongs to the SMC family. SMC6 subfamily. As to quaternary structure, forms a heterodimer with SMC5. The SMC5-SMC6 complex is composed of the SMC5 and SMC6 heterodimer attached via their hinge domain and from the non-SMC subunit NSE4A or NSE4B. As to expression, expressed in seedlings, rosette leaves and floral buds.

It localises to the nucleus. The protein localises to the chromosome. Functionally, core component of the SMC5-SMC6 complex that promotes sister chromatid alignment after DNA damage and facilitates double-stranded DNA breaks (DSBs) repair via homologous recombination between sister chromatids. This Arabidopsis thaliana (Mouse-ear cress) protein is Structural maintenance of chromosomes protein 6B (SMC6B).